A 312-amino-acid chain; its full sequence is Transcription initiation factor IIB 1 (312 aa).

Residues 12-43 form a TFIIB-type zinc finger; that stretch reads EIERCPECGSTNLIRDYEHGELVCGECGAVIE. Residues Cys-16, Cys-19, Cys-35, and Cys-38 each coordinate Zn(2+). 2 repeat units span residues 129–212 and 223–304.

The protein belongs to the TFIIB family.

Stabilizes TBP binding to an archaeal box-A promoter. Also responsible for recruiting RNA polymerase II to the pre-initiation complex (DNA-TBP-TFIIB). This is Transcription initiation factor IIB 1 from Thermoplasma volcanium (strain ATCC 51530 / DSM 4299 / JCM 9571 / NBRC 15438 / GSS1).